A 71-amino-acid chain; its full sequence is General transcription factor IIH subunit 5 (71 aa).

Position 69 is a phosphothreonine (Thr69).

Belongs to the TFB5 family. As to quaternary structure, component of the 7-subunit TFIIH core complex composed of XPB/ERCC3, XPD/ERCC2, GTF2H1, GTF2H2, GTF2H3, GTF2H4 and GTF2H5, which is active in NER. The core complex associates with the 3-subunit CDK-activating kinase (CAK) module composed of CCNH/cyclin H, CDK7 and MNAT1 to form the 10-subunit holoenzyme (holo-TFIIH) active in transcription. Part of TBP-based Pol II pre-initiation complex (PIC), in which Pol II core assembles with general transcription factors and other specific initiation factors including GTF2E1, GTF2E2, GTF2F1, GTF2F2, TCEA1, ERCC2, ERCC3, GTF2H2, GTF2H3, GTF2H4, GTF2H5, GTF2A1, GTF2A2, GTF2B and TBP; this large multi-subunit PIC complex mediates DNA unwinding and targets Pol II core to the transcription start site where the first phosphodiester bond forms.

Its subcellular location is the nucleus. The protein localises to the cytoplasm. In terms of biological role, component of the general transcription and DNA repair factor IIH (TFIIH) core complex, which is involved in general and transcription-coupled nucleotide excision repair (NER) of damaged DNA and, when complexed to CAK, in RNA transcription by RNA polymerase II. In NER, TFIIH acts by opening DNA around the lesion to allow the excision of the damaged oligonucleotide and its replacement by a new DNA fragment. In transcription, TFIIH has an essential role in transcription initiation. When the pre-initiation complex (PIC) has been established, TFIIH is required for promoter opening and promoter escape. Phosphorylation of the C-terminal tail (CTD) of the largest subunit of RNA polymerase II by the kinase module CAK controls the initiation of transcription. Necessary for the stability of the TFIIH complex and for the presence of normal levels of TFIIH in the cell. The sequence is that of General transcription factor IIH subunit 5 from Mus musculus (Mouse).